The primary structure comprises 272 residues: FAS1 domain-containing protein YDR262W (272 aa).

The N-terminal stretch at 1 to 26 (MIFNLPVSVLLYFSLIWAMEPSFVRG) is a signal peptide. The FAS1 domain occupies 100–269 (PLSLESKLSL…GVILMVDFTL (170 aa)).

The protein resides in the vacuole. The sequence is that of FAS1 domain-containing protein YDR262W from Saccharomyces cerevisiae (strain ATCC 204508 / S288c) (Baker's yeast).